Here is a 388-residue protein sequence, read N- to C-terminus: Mannitol-1-phosphate 5-dehydrogenase (388 aa).

5-16 (AIQFGGGNIGRG) is a binding site for NAD(+). Lys-213 is a catalytic residue.

The protein belongs to the mannitol dehydrogenase family. In terms of assembly, monomer.

It catalyses the reaction D-mannitol 1-phosphate + NAD(+) = beta-D-fructose 6-phosphate + NADH + H(+). Catalyzes the NAD(H)-dependent interconversion of D-fructose 6-phosphate and D-mannitol 1-phosphate in the mannitol metabolic pathway. This is Mannitol-1-phosphate 5-dehydrogenase (mpdA) from Aspergillus fumigatus (strain CBS 144.89 / FGSC A1163 / CEA10) (Neosartorya fumigata).